The primary structure comprises 265 residues: Probable ribose-5-phosphate isomerase 2 (265 aa).

A2 is modified (N-acetylalanine). At S96 the chain carries Phosphoserine.

The protein belongs to the ribose 5-phosphate isomerase family.

The protein localises to the cytoplasm. It carries out the reaction aldehydo-D-ribose 5-phosphate = D-ribulose 5-phosphate. It participates in carbohydrate degradation; pentose phosphate pathway; D-ribose 5-phosphate from D-ribulose 5-phosphate (non-oxidative stage): step 1/1. Catalyzes the reversible conversion of ribose-5-phosphate to ribulose 5-phosphate. The chain is Probable ribose-5-phosphate isomerase 2 (RPI2) from Arabidopsis thaliana (Mouse-ear cress).